Reading from the N-terminus, the 619-residue chain is Alpha-(1,6)-fucosyltransferase (619 aa).

The Cytoplasmic portion of the chain corresponds to 1–17 (MLLVRQLFGASANSWAR). The chain crosses the membrane as a helical; Signal-anchor for type II membrane protein span at residues 18 to 38 (ALIIFVLAWIGLVYVFVVKLT). The Lumenal portion of the chain corresponds to 39 to 619 (NTQGQQAAGE…TAKLPLYAGI (581 aa)). 3 disulfides stabilise this stretch: Cys-253/Cys-315, Cys-261/Cys-279, and Cys-267/Cys-271. A GT23 domain is found at 255-539 (NARKLVCKLN…PDAAHRFKSL (285 aa)). The short motif at 345-351 (PRPPYLP) is the SH3-binding element. Residues 411–412 (RR) are important for donor substrate binding. A disulfide bridge connects residues Cys-511 and Cys-518. The 62-residue stretch at 548–609 (QNAHNRRVVI…PSFKVEEKVD (62 aa)) folds into the SH3 domain.

It belongs to the glycosyltransferase 23 family. It depends on Mn(2+) as a cofactor. Mg(2+) serves as cofactor.

Its subcellular location is the golgi apparatus. It localises to the golgi stack membrane. The enzyme catalyses N(4)-{beta-D-GlcNAc-(1-&gt;2)-alpha-D-Man-(1-&gt;3)-[beta-D-GlcNAc-(1-&gt;2)-alpha-D-Man-(1-&gt;6)]-beta-D-Man-(1-&gt;4)-beta-D-GlcNAc-(1-&gt;4)-beta-D-GlcNAc}-L-asparaginyl-[protein] + GDP-beta-L-fucose = an N(4)-{beta-D-GlcNAc-(1-&gt;2)-alpha-D-Man-(1-&gt;3)-[beta-D-GlcNAc-(1-&gt;2)-alpha-D-Man-(1-&gt;6)]-beta-D-Man-(1-&gt;4)-beta-D-GlcNAc-(1-&gt;4)-[alpha-L-Fuc-(1-&gt;6)]-beta-D-GlcNAc}-L-asparaginyl-[protein] + GDP + H(+). Its pathway is protein modification; protein glycosylation. Its function is as follows. Catalyzes the addition of fucose in alpha 1-6 linkage to the first GlcNAc residue, next to the peptide chains in N-glycans. The addition is prevented if the GlcNAc residue is already fucosylated. The polypeptide is Alpha-(1,6)-fucosyltransferase (FucT6) (Drosophila melanogaster (Fruit fly)).